A 340-amino-acid polypeptide reads, in one-letter code: Putative D-lactate dehydrogenase (340 aa).

NAD(+)-binding positions include 153–154, Asp-174, 206–207, 233–235, and Asp-259; these read NI, TP, and VSR. The active site involves Arg-235. The active site involves Glu-264. His-296 acts as the Proton donor in catalysis.

It belongs to the D-isomer specific 2-hydroxyacid dehydrogenase family.

It catalyses the reaction (R)-lactate + NAD(+) = pyruvate + NADH + H(+). The chain is Putative D-lactate dehydrogenase (ldhA) from Dictyostelium discoideum (Social amoeba).